We begin with the raw amino-acid sequence, 111 residues long: Small ribosomal subunit protein bS16 (111 aa).

It belongs to the bacterial ribosomal protein bS16 family.

The chain is Small ribosomal subunit protein bS16 from Rickettsia bellii (strain OSU 85-389).